The sequence spans 149 residues: Pleckstrin homology domain-containing family J member 1 (149 aa).

Residues 15-108 (PAEMAAELGM…WMEALRRASY (94 aa)) form the PH domain.

Expressed in testis and liver.

This Homo sapiens (Human) protein is Pleckstrin homology domain-containing family J member 1 (PLEKHJ1).